A 931-amino-acid chain; its full sequence is MKASSGRCGLVRWLQVLLPFLLSLFPGALPVQIRYSIPEELAKNSVVGNLAKDLGLSVRDLPARKLRVSAEKEYFTVNPESGDLLVSDRIDREQICGKQPLCVLDFDTVAENPLNIFYIAVIVQDINDNTPLFKQTKINLKIGESTKPGTTFPLDPALDSDVGPNSLQRYHLNDNEYFDLAEKQTPDGRKYPELILQHSLDREEHSLHQLVLTAVDGGDPPQSGTTQIRVKVTDANDNPPVFSQDVYRVTLREDVPPGFFVLQVTATDRDEGVNAEITYSFHNVDEQVKHFFNLNEKTGEITTKDDLDFEIASSYTLSIEAKDPGDLAAHCSIQVEILDDNDCAPEVIVTSVFTPLPEDSPPGTVIALIKTRDRDSGENGEVYCQVLGNAKFILKSSSKNYYKLVTDGALDREEIPEYNLTITATDGGKPPLSSSIIVTLHISDVNDNAPVFQQTSYMVHVAENNPPGASIAQISASDPDLGPNGQVSYSIVASDLKPREILSYVSVSAQSGVVFAQRAFDHEQLRAFELTLQARDQGSPALSANVSLRVLVGDLNDNAPRVLYPALGSDGSALFDMVPRAAEPGYLVTKVVAVDADSGHNAWLSYHVLQASEPGLFSLGLRTGEVRTARALGDRDAARQRLLVAVRDGGQPPLSATATLHLIFADSLQEVLPDLSDRPEPSDPQAELQFYLVVALALISVLFFLAVILAISLRLRRSSRSDAWDCFQPGLSSKPGPGVLPSYSEGTLPYSYNLCVASQSAKTEFNFLNITPELIPAQDLLCDNASWEQNTNHGAAGVPFASDTILKQAPPNTDWRFSQAQRPGTSGSQNGDDTGTWPNNQFDTEMLQAMILASASEAADGSSTLGGGAGTMGLSARYGPQFTLQHVPDYRQNVYIPGSNATLTNAAGKRDGKAPAGGNGNKKKSGKKEKK.

The signal sequence occupies residues 1–30; that stretch reads MKASSGRCGLVRWLQVLLPFLLSLFPGALP. 6 consecutive Cadherin domains span residues 31–133, 134–242, 243–347, 348–452, 453–562, and 570–675; these read VQIR…TPLF, KQTK…PPVF, SQDV…APEV, IVTS…APVF, QQTS…APRV, and DGSA…LPDL. The Extracellular segment spans residues 31–691; sequence VQIRYSIPEE…SDPQAELQFY (661 aa). 2 N-linked (GlcNAc...) asparagine glycosylation sites follow: Asn-419 and Asn-545. Residues 692 to 712 form a helical membrane-spanning segment; that stretch reads LVVALALISVLFFLAVILAIS. Topologically, residues 713–931 are cytoplasmic; the sequence is LRLRRSSRSD…KKKSGKKEKK (219 aa). 2 disordered regions span residues 814–840 and 901–931; these read DWRF…WPNN and ATLT…KEKK. Residues 815 to 840 show a composition bias toward polar residues; sequence WRFSQAQRPGTSGSQNGDDTGTWPNN. Basic residues predominate over residues 921–931; sequence NKKKSGKKEKK.

It localises to the cell membrane. Functionally, potential calcium-dependent cell-adhesion protein. May be involved in the establishment and maintenance of specific neuronal connections in the brain. The polypeptide is Protocadherin gamma-B2 (PCDHGB2) (Pan troglodytes (Chimpanzee)).